Consider the following 488-residue polypeptide: Ribulose bisphosphate carboxylase large chain 1 (488 aa).

Positions 127 and 177 each coordinate substrate. Lys-179 acts as the Proton acceptor in catalysis. Substrate is bound at residue Lys-181. 3 residues coordinate Mg(2+): Lys-205, Asp-207, and Glu-208. Lys-205 carries the post-translational modification N6-carboxylysine. The Proton acceptor role is filled by His-297. Substrate contacts are provided by Arg-298, His-330, and Ser-382.

Belongs to the RuBisCO large chain family. Type I subfamily. As to quaternary structure, heterohexadecamer of 8 large chains and 8 small chains. Requires Mg(2+) as cofactor.

It carries out the reaction 2 (2R)-3-phosphoglycerate + 2 H(+) = D-ribulose 1,5-bisphosphate + CO2 + H2O. The enzyme catalyses D-ribulose 1,5-bisphosphate + O2 = 2-phosphoglycolate + (2R)-3-phosphoglycerate + 2 H(+). In terms of biological role, ruBisCO catalyzes two reactions: the carboxylation of D-ribulose 1,5-bisphosphate, the primary event in carbon dioxide fixation, as well as the oxidative fragmentation of the pentose substrate. Both reactions occur simultaneously and in competition at the same active site. In Bradyrhizobium sp. (strain BTAi1 / ATCC BAA-1182), this protein is Ribulose bisphosphate carboxylase large chain 1.